The chain runs to 230 residues: Phosphatidylserine decarboxylase proenzyme (230 aa).

The Schiff-base intermediate with substrate; via pyruvic acid role is filled by S186. S186 carries the post-translational modification Pyruvic acid (Ser); by autocatalysis.

This sequence belongs to the phosphatidylserine decarboxylase family. PSD-A subfamily. In terms of assembly, heterodimer of a large membrane-associated beta subunit and a small pyruvoyl-containing alpha subunit. Pyruvate serves as cofactor. In terms of processing, is synthesized initially as an inactive proenzyme. Formation of the active enzyme involves a self-maturation process in which the active site pyruvoyl group is generated from an internal serine residue via an autocatalytic post-translational modification. Two non-identical subunits are generated from the proenzyme in this reaction, and the pyruvate is formed at the N-terminus of the alpha chain, which is derived from the carboxyl end of the proenzyme. The post-translation cleavage follows an unusual pathway, termed non-hydrolytic serinolysis, in which the side chain hydroxyl group of the serine supplies its oxygen atom to form the C-terminus of the beta chain, while the remainder of the serine residue undergoes an oxidative deamination to produce ammonia and the pyruvoyl prosthetic group on the alpha chain.

Its subcellular location is the cell membrane. The enzyme catalyses a 1,2-diacyl-sn-glycero-3-phospho-L-serine + H(+) = a 1,2-diacyl-sn-glycero-3-phosphoethanolamine + CO2. The protein operates within phospholipid metabolism; phosphatidylethanolamine biosynthesis; phosphatidylethanolamine from CDP-diacylglycerol: step 2/2. In terms of biological role, catalyzes the formation of phosphatidylethanolamine (PtdEtn) from phosphatidylserine (PtdSer). The protein is Phosphatidylserine decarboxylase proenzyme of Wolbachia sp. subsp. Brugia malayi (strain TRS).